The primary structure comprises 185 residues: Ribosome-recycling factor (185 aa).

It belongs to the RRF family.

Its subcellular location is the cytoplasm. Its function is as follows. Responsible for the release of ribosomes from messenger RNA at the termination of protein biosynthesis. May increase the efficiency of translation by recycling ribosomes from one round of translation to another. The polypeptide is Ribosome-recycling factor (Pseudomonas putida (strain W619)).